Here is a 198-residue protein sequence, read N- to C-terminus: Nucleoid occlusion factor SlmA (198 aa).

The HTH tetR-type domain occupies 11 to 71 (PNRKHQILES…GLIDFIEESI (61 aa)). A DNA-binding region (H-T-H motif) is located at residues 34–53 (TTAKLAAEVGFSEAALYRHF).

This sequence belongs to the nucleoid occlusion factor SlmA family. Homodimer. Interacts with FtsZ.

Its subcellular location is the cytoplasm. The protein resides in the nucleoid. Required for nucleoid occlusion (NO) phenomenon, which prevents Z-ring formation and cell division over the nucleoid. Acts as a DNA-associated cell division inhibitor that binds simultaneously chromosomal DNA and FtsZ, and disrupts the assembly of FtsZ polymers. SlmA-DNA-binding sequences (SBS) are dispersed on non-Ter regions of the chromosome, preventing FtsZ polymerization at these regions. The protein is Nucleoid occlusion factor SlmA of Colwellia psychrerythraea (strain 34H / ATCC BAA-681) (Vibrio psychroerythus).